A 386-amino-acid chain; its full sequence is Cell division protein FtsZ (386 aa).

Residues 21-25 (GGGGN), 108-110 (GTG), Glu-139, Arg-143, and Asn-187 each bind GTP.

It belongs to the FtsZ family. In terms of assembly, homodimer. Polymerizes to form a dynamic ring structure in a strictly GTP-dependent manner. Interacts directly with several other division proteins.

It is found in the cytoplasm. In terms of biological role, essential cell division protein that forms a contractile ring structure (Z ring) at the future cell division site. The regulation of the ring assembly controls the timing and the location of cell division. One of the functions of the FtsZ ring is to recruit other cell division proteins to the septum to produce a new cell wall between the dividing cells. Binds GTP and shows GTPase activity. The protein is Cell division protein FtsZ of Coxiella burnetii (strain RSA 493 / Nine Mile phase I).